A 125-amino-acid chain; its full sequence is Large ribosomal subunit protein bL12 (125 aa).

The protein belongs to the bacterial ribosomal protein bL12 family. As to quaternary structure, homodimer. Part of the ribosomal stalk of the 50S ribosomal subunit. Forms a multimeric L10(L12)X complex, where L10 forms an elongated spine to which 2 to 4 L12 dimers bind in a sequential fashion. Binds GTP-bound translation factors.

In terms of biological role, forms part of the ribosomal stalk which helps the ribosome interact with GTP-bound translation factors. Is thus essential for accurate translation. The sequence is that of Large ribosomal subunit protein bL12 from Granulibacter bethesdensis (strain ATCC BAA-1260 / CGDNIH1).